The following is a 160-amino-acid chain: Cytochrome b6-f complex subunit 4 (160 aa).

3 consecutive transmembrane segments (helical) span residues 36–56 (LLYIFPVVILGTIACNVGLAV), 95–115 (LLGVLLMVSVPAGLLTVPFLE), and 131–151 (TVFLIGTVVALWLGIGATLPI).

This sequence belongs to the cytochrome b family. PetD subfamily. The 4 large subunits of the cytochrome b6-f complex are cytochrome b6, subunit IV (17 kDa polypeptide, petD), cytochrome f and the Rieske protein, while the 4 small subunits are petG, petL, petM and petN. The complex functions as a dimer.

Its subcellular location is the plastid. The protein localises to the chloroplast thylakoid membrane. Its function is as follows. Component of the cytochrome b6-f complex, which mediates electron transfer between photosystem II (PSII) and photosystem I (PSI), cyclic electron flow around PSI, and state transitions. The sequence is that of Cytochrome b6-f complex subunit 4 from Pisum sativum (Garden pea).